The following is a 230-amino-acid chain: Phosphoribosylformylglycinamidine synthase subunit PurQ (230 aa).

The Glutamine amidotransferase type-1 domain maps to 2–226 (RVAVIVFPGS…LKTWREQNSV (225 aa)). Cys86 functions as the Nucleophile in the catalytic mechanism. Active-site residues include His195 and Glu197.

Part of the FGAM synthase complex composed of 1 PurL, 1 PurQ and 2 PurS subunits.

It localises to the cytoplasm. The catalysed reaction is N(2)-formyl-N(1)-(5-phospho-beta-D-ribosyl)glycinamide + L-glutamine + ATP + H2O = 2-formamido-N(1)-(5-O-phospho-beta-D-ribosyl)acetamidine + L-glutamate + ADP + phosphate + H(+). It carries out the reaction L-glutamine + H2O = L-glutamate + NH4(+). Its pathway is purine metabolism; IMP biosynthesis via de novo pathway; 5-amino-1-(5-phospho-D-ribosyl)imidazole from N(2)-formyl-N(1)-(5-phospho-D-ribosyl)glycinamide: step 1/2. Functionally, part of the phosphoribosylformylglycinamidine synthase complex involved in the purines biosynthetic pathway. Catalyzes the ATP-dependent conversion of formylglycinamide ribonucleotide (FGAR) and glutamine to yield formylglycinamidine ribonucleotide (FGAM) and glutamate. The FGAM synthase complex is composed of three subunits. PurQ produces an ammonia molecule by converting glutamine to glutamate. PurL transfers the ammonia molecule to FGAR to form FGAM in an ATP-dependent manner. PurS interacts with PurQ and PurL and is thought to assist in the transfer of the ammonia molecule from PurQ to PurL. The polypeptide is Phosphoribosylformylglycinamidine synthase subunit PurQ (Brevibacillus brevis (strain 47 / JCM 6285 / NBRC 100599)).